The sequence spans 335 residues: Methionine import ATP-binding protein MetN 1 (335 aa).

The ABC transporter domain occupies 2-242; it reads IEFQNVHKTY…PKHPTTRRFV (241 aa). 38–45 is an ATP binding site; it reads GHSGAGKS.

It belongs to the ABC transporter superfamily. Methionine importer (TC 3.A.1.24) family. The complex is composed of two ATP-binding proteins (MetN), two transmembrane proteins (MetI) and a solute-binding protein (MetQ).

It is found in the cell inner membrane. It carries out the reaction L-methionine(out) + ATP + H2O = L-methionine(in) + ADP + phosphate + H(+). The catalysed reaction is D-methionine(out) + ATP + H2O = D-methionine(in) + ADP + phosphate + H(+). Part of the ABC transporter complex MetNIQ involved in methionine import. Responsible for energy coupling to the transport system. The protein is Methionine import ATP-binding protein MetN 1 of Pseudomonas fluorescens (strain ATCC BAA-477 / NRRL B-23932 / Pf-5).